A 684-amino-acid chain; its full sequence is Zinc finger BED domain-containing protein RICESLEEPER 4 (684 aa).

Residues 54 to 113 form a BED-type zinc finger; that stretch reads KRKSAIWEHFTLVDVSDGCKRASCIHCNQSLAYSSGSKNSGTSHLTRHIAEWCRVLKDRQ. Cys77, Cys80, His101, and Cys106 together coordinate Zn(2+). The tract at residues 595 to 680 is HATC (Hobo-Ac-Tam3) domain; that stretch reads ELELYLEEAL…EALLCAKDWL (86 aa).

As to quaternary structure, homodimer.

Its subcellular location is the nucleus. Transposase-like protein that is essential for plant growth and development. May regulate global gene expression by recruiting other cellular factors. This Oryza sativa subsp. japonica (Rice) protein is Zinc finger BED domain-containing protein RICESLEEPER 4.